Consider the following 297-residue polypeptide: Light-independent protochlorophyllide reductase iron-sulfur ATP-binding protein (297 aa).

Residues 41–46 and lysine 70 contribute to the ATP site; that span reads GIGKST. Serine 45 lines the Mg(2+) pocket. [4Fe-4S] cluster contacts are provided by cysteine 126 and cysteine 160. Residues 211–212 and 235–237 each bind ATP; these read NR and PDL.

The protein belongs to the NifH/BchL/ChlL family. In terms of assembly, homodimer. Protochlorophyllide reductase is composed of three subunits; BchL, BchN and BchB. [4Fe-4S] cluster is required as a cofactor.

It catalyses the reaction chlorophyllide a + oxidized 2[4Fe-4S]-[ferredoxin] + 2 ADP + 2 phosphate = protochlorophyllide a + reduced 2[4Fe-4S]-[ferredoxin] + 2 ATP + 2 H2O. The protein operates within porphyrin-containing compound metabolism; bacteriochlorophyll biosynthesis (light-independent). Component of the dark-operative protochlorophyllide reductase (DPOR) that uses Mg-ATP and reduced ferredoxin to reduce ring D of protochlorophyllide (Pchlide) to form chlorophyllide a (Chlide). This reaction is light-independent. The L component serves as a unique electron donor to the NB-component of the complex, and binds Mg-ATP. This Methylorubrum populi (strain ATCC BAA-705 / NCIMB 13946 / BJ001) (Methylobacterium populi) protein is Light-independent protochlorophyllide reductase iron-sulfur ATP-binding protein.